We begin with the raw amino-acid sequence, 299 residues long: Protoheme IX farnesyltransferase 1 (299 aa).

9 helical membrane passes run 24–44 (VVAL…PGVP), 46–66 (AAVV…AAMV), 97–117 (LLVA…CCNA), 118–138 (LTAW…TLLL), 146–166 (IVIG…AVNG), 170–190 (AFAL…FWAL), 217–237 (LSIV…VALG), 239–259 (AGAI…FLAV), and 278–298 (IWYL…LIPL).

It belongs to the UbiA prenyltransferase family. Protoheme IX farnesyltransferase subfamily.

Its subcellular location is the cell inner membrane. It catalyses the reaction heme b + (2E,6E)-farnesyl diphosphate + H2O = Fe(II)-heme o + diphosphate. It functions in the pathway porphyrin-containing compound metabolism; heme O biosynthesis; heme O from protoheme: step 1/1. Functionally, converts heme B (protoheme IX) to heme O by substitution of the vinyl group on carbon 2 of heme B porphyrin ring with a hydroxyethyl farnesyl side group. The chain is Protoheme IX farnesyltransferase 1 from Chromobacterium violaceum (strain ATCC 12472 / DSM 30191 / JCM 1249 / CCUG 213 / NBRC 12614 / NCIMB 9131 / NCTC 9757 / MK).